The primary structure comprises 563 residues: Tripeptidyl-peptidase 1 (563 aa).

The N-terminal stretch at 1–19 is a signal peptide; sequence MGLQARFLGLLALVIAGKC. A propeptide spans 20–195 (removed in mature form); sequence THSPEPDQRW…PEPQGVGPVG (176 aa). Cys-111 and Cys-122 are disulfide-bonded. The 365-residue stretch at 199-563 folds into the Peptidase S53 domain; that stretch reads GVTPSVLRQR…PALLKTLLNP (365 aa). Residues Asn-210 and Asn-222 are each glycosylated (N-linked (GlcNAc...) asparagine). Catalysis depends on charge relay system residues Glu-272 and Asp-276. N-linked (GlcNAc...) asparagine glycosylation is found at Asn-286, Asn-313, and Asn-443. Disulfide bonds link Cys-365-Cys-526 and Cys-522-Cys-537. The active-site Charge relay system is Ser-475. Ca(2+)-binding residues include Asp-517 and Val-518. The Ca(2+) site is built by Gly-539, Gly-541, and Asp-543.

As to quaternary structure, monomer. Interacts with CLN5. Interacts with CLN3. Ca(2+) is required as a cofactor. Activated by autocatalytic proteolytical processing upon acidification. N-glycosylation is required for processing and activity.

The protein resides in the lysosome. It localises to the melanosome. The catalysed reaction is Release of an N-terminal tripeptide from a polypeptide, but also has endopeptidase activity.. In terms of biological role, lysosomal serine protease with tripeptidyl-peptidase I activity. May act as a non-specific lysosomal peptidase which generates tripeptides from the breakdown products produced by lysosomal proteinases. Requires substrates with an unsubstituted N-terminus. In Rattus norvegicus (Rat), this protein is Tripeptidyl-peptidase 1 (Tpp1).